The primary structure comprises 216 residues: MSRRKQPDSPLFPLQAPVPDFTFERAAHRDGFWPVAGADEAGRGPLAGPVVAAAVILDPDAIPAGLNDSKLLTAEQREALFEEILATSTVSIASSSSARIDTTDILKASLDAMRRAVHGLELAARIVLVDGRDVPPGLSCHAKAIVKGDSRSVSIAAASIVAKVTRDRMMARADATFPLYGFAHHAGYATVKHRTAIESHGPCSLHRMSFRPFRQV.

The RNase H type-2 domain occupies 33 to 216; that stretch reads WPVAGADEAG…RMSFRPFRQV (184 aa). Positions 39, 40, and 130 each coordinate a divalent metal cation.

This sequence belongs to the RNase HII family. It depends on Mn(2+) as a cofactor. Mg(2+) is required as a cofactor.

It is found in the cytoplasm. The enzyme catalyses Endonucleolytic cleavage to 5'-phosphomonoester.. Functionally, endonuclease that specifically degrades the RNA of RNA-DNA hybrids. This chain is Ribonuclease HII, found in Rhizobium meliloti (strain 1021) (Ensifer meliloti).